Here is a 240-residue protein sequence, read N- to C-terminus: Ribosomal RNA large subunit methyltransferase E (240 aa).

The span at 1–13 (MAKKPGSQNTSGR) shows a compositional bias: polar residues. The tract at residues 1 to 20 (MAKKPGSQNTSGRGQRDLKV) is disordered. S-adenosyl-L-methionine is bound by residues Gly-85, Trp-87, Asp-113, Asp-129, and Asp-153. Lys-193 serves as the catalytic Proton acceptor.

It belongs to the class I-like SAM-binding methyltransferase superfamily. RNA methyltransferase RlmE family.

The protein localises to the cytoplasm. The catalysed reaction is uridine(2552) in 23S rRNA + S-adenosyl-L-methionine = 2'-O-methyluridine(2552) in 23S rRNA + S-adenosyl-L-homocysteine + H(+). Functionally, specifically methylates the uridine in position 2552 of 23S rRNA at the 2'-O position of the ribose in the fully assembled 50S ribosomal subunit. The polypeptide is Ribosomal RNA large subunit methyltransferase E (Roseobacter denitrificans (strain ATCC 33942 / OCh 114) (Erythrobacter sp. (strain OCh 114))).